A 217-amino-acid polypeptide reads, in one-letter code: 3,4-dihydroxy-2-butanone 4-phosphate synthase (217 aa).

Residues 37–38, D42, 150–154, and E174 each bind D-ribulose 5-phosphate; these read RE and RRGHT. Residue E38 participates in Mg(2+) binding. Position 153 (H153) interacts with Mg(2+).

This sequence belongs to the DHBP synthase family. Homodimer. It depends on Mg(2+) as a cofactor. Mn(2+) serves as cofactor.

It catalyses the reaction D-ribulose 5-phosphate = (2S)-2-hydroxy-3-oxobutyl phosphate + formate + H(+). It participates in cofactor biosynthesis; riboflavin biosynthesis; 2-hydroxy-3-oxobutyl phosphate from D-ribulose 5-phosphate: step 1/1. Functionally, catalyzes the conversion of D-ribulose 5-phosphate to formate and 3,4-dihydroxy-2-butanone 4-phosphate. This Shewanella loihica (strain ATCC BAA-1088 / PV-4) protein is 3,4-dihydroxy-2-butanone 4-phosphate synthase.